A 117-amino-acid chain; its full sequence is Eukaryotic translation initiation factor 4E-binding protein (117 aa).

Phosphothreonine is present on residues T37 and T46. Positions 54–60 (YERAFMK) match the YXXXXLphi motif; atypical motif. Residue S65 is modified to Phosphoserine. A Phosphothreonine modification is found at T70.

It belongs to the eIF4E-binding protein family. In terms of assembly, hypophosphorylated Thor/4E-BP competes with eIF4G1 to interact with eIF4E1; insulin stimulated Akt1 or Tor phosphorylation of Thor/4E-BP causes dissociation of the complex allowing eIF4G1 to bind and consequent initiation of translation. Phosphorylation at Thr-37, Thr-46, Ser-65 and Thr-70, corresponding to the hyperphosphorylated form, impairs its ability to prevent the interaction between eIF4G1 and eIF4E1, without affecting its interaction with free eIF4E1. Phosphorylated in rtesponse to insulin. Phosphorylation at Thr-46 is regulated by Tor and constitutes the major phosphorylation event that regulates activity. Widely expressed.

Its function is as follows. Repressor of translation initiation that regulates eIF4E1 activity by preventing its assembly into the eIF4F complex. Hypophosphorylated form competes with eIF4G1 and strongly binds to eIF4E1, leading to repress translation. In contrast, hyperphosphorylated form dissociates from eIF4E1, allowing interaction between eIF4G1 and eIF4E1, leading to initiation of translation. Acts as a regulator of various biological processes, such as innate immunity, cell growth or synaptic transmission. Acts downstream of phosphoinositide-3-kinase (PI3K) to regulate cell growth. Extends lifespan upon dietary restriction by regulating the mitochondrial translation. Acts as a regulator of lifespan in response to cold by regulating the mitochondrial translation. Acts as a negative regulator of presynaptic release of neurotransmitter in motor neurons: Thor expression is induced in response to insulin signaling, leading to prevent of translation of complexin (cpx), a protein known to regulate the exocytosis of synaptic vesicles. Acts as a negative regulator of synaptic strength at the neuromuscular junction: Thor expression in response to acute fasting prevents translation, thereby suppressing retrograde synaptic enhancement. The polypeptide is Eukaryotic translation initiation factor 4E-binding protein (Drosophila melanogaster (Fruit fly)).